The primary structure comprises 484 residues: Cysteine--tRNA ligase (484 aa).

A Zn(2+)-binding site is contributed by C29. Positions 31-41 match the 'HIGH' region motif; the sequence is ITVYDYCHLGH. Zn(2+) contacts are provided by C215, H240, and E244. The short motif at 272-276 is the 'KMSKS' region element; it reads KMSKS. K275 contributes to the ATP binding site.

This sequence belongs to the class-I aminoacyl-tRNA synthetase family. As to quaternary structure, monomer. Requires Zn(2+) as cofactor.

Its subcellular location is the cytoplasm. The catalysed reaction is tRNA(Cys) + L-cysteine + ATP = L-cysteinyl-tRNA(Cys) + AMP + diphosphate. The protein is Cysteine--tRNA ligase of Rippkaea orientalis (strain PCC 8801 / RF-1) (Cyanothece sp. (strain PCC 8801)).